The primary structure comprises 215 residues: Ras-related protein Rab-5A (215 aa).

The GTP site is built by serine 29, alanine 30, glycine 32, lysine 33, serine 34, serine 35, histidine 46, glutamate 47, threonine 52, and glycine 78. Residue serine 34 coordinates Mg(2+). Short sequence motifs (switch) lie at residues 44-56 and 77-93; these read QFHE…IGAA and AGQE…YRGA. Threonine 52 is a Mg(2+) binding site. Serine 84 is modified (phosphoserine). Residues asparagine 133, lysine 134, aspartate 136, alanine 164, and lysine 165 each coordinate GTP. Positions 181 to 215 are disordered; sequence LPKNEPQNPGANSARGRGVDLTEPAQPARSQCCSN. Residues cysteine 212 and cysteine 213 are each lipidated (S-geranylgeranyl cysteine).

This sequence belongs to the small GTPase superfamily. Rab family. In terms of assembly, interacts with GDI1; this promotes dissociation from membranes; phosphorylation at Ser-84 disrupts this interaction. Interacts with GDI2; phosphorylation at Ser-84 disrupts the interaction. Interacts with EEA1. Interacts with RIN1 and GAPVD1, which regulate its pathway, probably by acting as a GEF. Interacts with ALS2CL, SUN2, ZFYVE20 and RUFY1. Interacts with RABEP1; one RABEP1 homodimer binds two RAB5A chains, but at opposite sides of the dimer. Interacts with SGSM1, SGSM3 and PIK3CB. Interacts with RINL. May be a component of a complex composed of RAB5A, DYN2 and PIK3C3. Does not interact with the BLOC-3 complex (heterodimer of HPS1 and HPS4). Interacts with CLN5. Interacts with APPL2. Interacts with F8A1/F8A2/F8A3. Found in a complex with F8A1/F8A2/F8A3, HTT and RAB5A; mediates the recruitment of HTT by RAB5A onto early endosomes. Interacts with ATP9A. Interacts with PPP1R21; mediates the recruitment of FERRY complex by RAB5A onto early endosomes. The cofactor is Mg(2+). Post-translationally, phosphorylation of Ser-84 in the switch II region by LRRK2 prevents the association of RAB regulatory proteins, including RAB GDP dissociation inhibitors GDI1 and GDI2.

Its subcellular location is the cell membrane. It is found in the early endosome membrane. It localises to the melanosome. The protein localises to the cytoplasmic vesicle. The protein resides in the cell projection. Its subcellular location is the ruffle. It is found in the membrane. It localises to the cytoplasm. The protein localises to the cytosol. The protein resides in the phagosome membrane. Its subcellular location is the endosome membrane. It carries out the reaction GTP + H2O = GDP + phosphate + H(+). Regulated by guanine nucleotide exchange factors (GEFs) including RINL, which promote the exchange of bound GDP for free GTP. Regulated by GTPase activating proteins (GAPs) which increase the GTP hydrolysis activity. Inhibited by GDP dissociation inhibitors (GDIs). The small GTPases Rab are key regulators of intracellular membrane trafficking, from the formation of transport vesicles to their fusion with membranes. Rabs cycle between an inactive GDP-bound form and an active GTP-bound form that is able to recruit to membranes different sets of downstream effectors directly responsible for vesicle formation, movement, tethering and fusion. RAB5A is required for the fusion of plasma membranes and early endosomes. Contributes to the regulation of filopodia extension. Required for the exosomal release of SDCBP, CD63, PDCD6IP and syndecan. Regulates maturation of apoptotic cell-containing phagosomes, probably downstream of DYN2 and PIK3C3. This Rattus norvegicus (Rat) protein is Ras-related protein Rab-5A.